The following is a 71-amino-acid chain: Small ribosomal subunit protein bS18 (71 aa).

The protein belongs to the bacterial ribosomal protein bS18 family. As to quaternary structure, part of the 30S ribosomal subunit. Forms a tight heterodimer with protein bS6.

Its function is as follows. Binds as a heterodimer with protein bS6 to the central domain of the 16S rRNA, where it helps stabilize the platform of the 30S subunit. The sequence is that of Small ribosomal subunit protein bS18 from Nostoc punctiforme (strain ATCC 29133 / PCC 73102).